The following is a 238-amino-acid chain: NEDD4-binding protein 2-like 1 (238 aa).

Disordered regions lie at residues 1 to 36 (MEDS…PRRH) and 183 to 212 (VLHA…WNTY). A compositionally biased stretch (pro residues) spans 20–31 (QPPPRPPPARGP). The span at 192–212 (ANRNQGRNSEPSSGSGYWNTY) shows a compositional bias: polar residues.

In terms of assembly, interacts with dynactin subunit proteins, including DCTN4, DCTN5 and DCTN5.

Might play a role in adipocyte differentiation and triglyceride accumulation. This Mus musculus (Mouse) protein is NEDD4-binding protein 2-like 1 (N4bp2l1).